The following is a 415-amino-acid chain: Adipocyte plasma membrane-associated protein (415 aa).

Topologically, residues 1 to 39 are cytoplasmic; sequence MNEPEGLRFRRLNRPHIITDETHEPQYKATSTYSGKVFR. The chain crosses the membrane as a helical span at residues 40 to 60; the sequence is VTLLTMVAFLLLPLLVVVFVL. At 61-412 the chain is on the extracellular side; the sequence is ESPIQPEVFS…RSPYLCKLDL (352 aa). The N-linked (GlcNAc...) asparagine glycan is linked to Asn-159.

It belongs to the strictosidine synthase family.

It is found in the membrane. The chain is Adipocyte plasma membrane-associated protein (apmap) from Danio rerio (Zebrafish).